Reading from the N-terminus, the 240-residue chain is uncharacterized protein (240 aa).

Transmembrane regions (helical) follow at residues isoleucine 12–serine 32, isoleucine 66–valine 86, and isoleucine 89–phenylalanine 109. N-linked (GlcNAc...) asparagine; by host glycans are attached at residues asparagine 129 and asparagine 157.

The protein localises to the membrane. This is an uncharacterized protein from Acanthamoeba polyphaga mimivirus (APMV).